Consider the following 121-residue polypeptide: uncharacterized protein (121 aa).

Positions 101–121 (TVVKKEDVRESPVDTFMENAT) are disordered. The segment covering 102 to 112 (VVKKEDVRESP) has biased composition (basic and acidic residues).

This is an uncharacterized protein from Schizosaccharomyces pombe (strain 972 / ATCC 24843) (Fission yeast).